The primary structure comprises 105 residues: UPF0145 protein HD_1349 (105 aa).

Belongs to the UPF0145 family.

This chain is UPF0145 protein HD_1349, found in Haemophilus ducreyi (strain 35000HP / ATCC 700724).